Reading from the N-terminus, the 568-residue chain is 2-succinyl-5-enolpyruvyl-6-hydroxy-3-cyclohexene-1-carboxylate synthase (568 aa).

It belongs to the TPP enzyme family. MenD subfamily. Homodimer. Mg(2+) serves as cofactor. It depends on Mn(2+) as a cofactor. Requires thiamine diphosphate as cofactor.

The enzyme catalyses isochorismate + 2-oxoglutarate + H(+) = 5-enolpyruvoyl-6-hydroxy-2-succinyl-cyclohex-3-ene-1-carboxylate + CO2. The protein operates within quinol/quinone metabolism; 1,4-dihydroxy-2-naphthoate biosynthesis; 1,4-dihydroxy-2-naphthoate from chorismate: step 2/7. It participates in cofactor biosynthesis; phylloquinone biosynthesis. Its function is as follows. Catalyzes the thiamine diphosphate-dependent decarboxylation of 2-oxoglutarate and the subsequent addition of the resulting succinic semialdehyde-thiamine pyrophosphate anion to isochorismate to yield 2-succinyl-5-enolpyruvyl-6-hydroxy-3-cyclohexene-1-carboxylate (SEPHCHC). The protein is 2-succinyl-5-enolpyruvyl-6-hydroxy-3-cyclohexene-1-carboxylate synthase of Synechococcus sp. (strain CC9902).